The sequence spans 184 residues: Ras-related protein O-Krev (184 aa).

Position 10 to 17 (10 to 17 (GSGGVGKS)) interacts with GTP. The short motif at 32 to 40 (YDPTIEDSY) is the Effector region element. GTP contacts are provided by residues 57-61 (DTAGT) and 116-119 (NKCD). C181 bears the Cysteine methyl ester mark. C181 carries S-geranylgeranyl cysteine lipidation. Residues 182–184 (TLL) constitute a propeptide, removed in mature form.

Belongs to the small GTPase superfamily. Ras family.

It is found in the cell membrane. The enzyme catalyses GTP + H2O = GDP + phosphate + H(+). The polypeptide is Ras-related protein O-Krev (Diplobatis ommata (Ocellated electric ray)).